A 191-amino-acid polypeptide reads, in one-letter code: Threonylcarbamoyl-AMP synthase (191 aa).

One can recognise a YrdC-like domain in the interval 10 to 191; the sequence is PFRVRHAAAE…DGRSGAYLRR (182 aa).

The protein belongs to the SUA5 family. TsaC subfamily.

The protein localises to the cytoplasm. It catalyses the reaction L-threonine + hydrogencarbonate + ATP = L-threonylcarbamoyladenylate + diphosphate + H2O. Functionally, required for the formation of a threonylcarbamoyl group on adenosine at position 37 (t(6)A37) in tRNAs that read codons beginning with adenine. Catalyzes the conversion of L-threonine, HCO(3)(-)/CO(2) and ATP to give threonylcarbamoyl-AMP (TC-AMP) as the acyladenylate intermediate, with the release of diphosphate. This chain is Threonylcarbamoyl-AMP synthase, found in Halorhodospira halophila (strain DSM 244 / SL1) (Ectothiorhodospira halophila (strain DSM 244 / SL1)).